Reading from the N-terminus, the 451-residue chain is MKDEQLYYFEKSPVFKAMMHFSLPMMIGTLLSVIYGILNIYFIGFLEDSHMISAISLTLPVFAILMGLGNLFGVGAGTYISRLLGAKDYSKSKFVSSFSIYGGIALGLIVILVTLPFSDQIAAILGARGETLALTSNYLKVMFLSAPFVILFFILEQFARAIGAPMVSMIGMLASVGLNIILDPILIFGFDLNVVGAALGTAISNVAAALFFIIYFMKNSDVVSVNIKLAKPNKEMLSEIFKIGIPAFLMSILMGFTGLVLNLFLAHYGNFAIASYGISFRLVQFPELIIMGLCEGVVPLIAYNFMANKGRMKDVIKAVIMSIGVIFVVCMSAVFTIGHHMVGLFTTDQAIVEMATFILKVTMASLLLNGIGFLFTGMLQATGQGRGATIMAILQGAIIIPVLFIMNALFGLTGVIWSLLIAESLCALAAMLIVYLLRDRLTVDTSELIEG.

The next 12 membrane-spanning stretches (helical) occupy residues 26 to 46 (MIGT…IGFL), 54 to 74 (AISL…LFGV), 97 to 117 (SFSI…TLPF), 139 to 159 (LKVM…EQFA), 170 to 190 (IGML…IFGF), 194 to 214 (VVGA…FFII), 245 to 265 (IPAF…NLFL), 282 to 302 (LVQF…PLIA), 318 to 338 (AVIM…FTIG), 355 to 375 (ATFI…GFLF), 397 to 417 (AIII…GVIW), and 418 to 438 (SLLI…YLLR).

The protein belongs to the multi antimicrobial extrusion (MATE) (TC 2.A.66.1) family. MepA subfamily.

The protein resides in the cell membrane. Multidrug resistance efflux protein. The chain is Multidrug export protein MepA (mepA) from Staphylococcus aureus (strain COL).